A 584-amino-acid polypeptide reads, in one-letter code: Arginine--tRNA ligase (584 aa).

A 'HIGH' region motif is present at residues alanine 129–histidine 139.

The protein belongs to the class-I aminoacyl-tRNA synthetase family. As to quaternary structure, monomer.

Its subcellular location is the cytoplasm. The enzyme catalyses tRNA(Arg) + L-arginine + ATP = L-arginyl-tRNA(Arg) + AMP + diphosphate. In Halorhodospira halophila (strain DSM 244 / SL1) (Ectothiorhodospira halophila (strain DSM 244 / SL1)), this protein is Arginine--tRNA ligase.